We begin with the raw amino-acid sequence, 521 residues long: Bifunctional dihydrofolate reductase-thymidylate synthase (521 aa).

Positions 22–232 (AFSLVVAVDE…TKYYFEKLIP (211 aa)) constitute a DHFR domain. V26 contributes to the substrate binding site. Residues A28 and 34–40 (GIGDGRS) each bind NADP(+). Position 48 (D48) interacts with substrate. Residues 78 to 80 (RKT) and 99 to 102 (LSST) each bind NADP(+). Substrate-binding residues include I154, Y160, and T178. 155–162 (GGGSVYAE) is a binding site for NADP(+). The segment at 237–521 (EEQYLSLVDR…YPPISMKMAV (285 aa)) is thymidylate synthase. R257 provides a ligand contact to dUMP. C403 is an active-site residue. DUMP-binding positions include H404, 422 to 426 (QRSCD), N434, and 464 to 466 (HVY).

It in the N-terminal section; belongs to the dihydrofolate reductase family. This sequence in the C-terminal section; belongs to the thymidylate synthase family. In terms of assembly, homodimer.

The catalysed reaction is (6S)-5,6,7,8-tetrahydrofolate + NADP(+) = 7,8-dihydrofolate + NADPH + H(+). It carries out the reaction dUMP + (6R)-5,10-methylene-5,6,7,8-tetrahydrofolate = 7,8-dihydrofolate + dTMP. It functions in the pathway cofactor biosynthesis; tetrahydrofolate biosynthesis; 5,6,7,8-tetrahydrofolate from 7,8-dihydrofolate: step 1/1. Functionally, bifunctional enzyme. Involved in de novo dTMP biosynthesis. Key enzyme in folate metabolism. Catalyzes an essential reaction for de novo glycine and purine synthesis, DNA precursor synthesis, and for the conversion of dUMP to dTMP. The protein is Bifunctional dihydrofolate reductase-thymidylate synthase of Trypanosoma cruzi.